We begin with the raw amino-acid sequence, 382 residues long: MSAYSRPVLLLLCGLLLFTISIAVLNTLVPLWLSHQQLPTWQVGMVSSSYFSGNLVGTLIAGRIIQQLGFNRSYHYSCILFALATCGLMLSVDFWSWLGWRFFAGVACALIWVIVESALLRSGTVTNRGQLLAAYMMVYYLGTVTGQLLLGVVSTQLLSVIPWVSALVITAMLPLLFAHFSHQDSGDVPHIAVWPMLKRRSARLGINGCIISGVLLGSLYGLLPLYLSHQGMSDASVGWWMALLVSSGIIGQWPIGKMADRYGRLLVLRIQVFVVILGSIAILGNYALAPALFILGCAGFTLYPVAMAWACEKVSADKLVAMNQALLMSYTIGSLTGPTMTSLLMQRYSDNLLFIMIAGVALVYLMMLLRKPDQQKTPFAAV.

12 consecutive transmembrane segments (helical) span residues 8-28 (VLLLLCGLLLFTISIAVLNTL), 41-61 (WQVGMVSSSYFSGNLVGTLIA), 73-93 (SYHYSCILFALATCGLMLSVD), 94-114 (FWSWLGWRFFAGVACALIWVI), 133-153 (AAYMMVYYLGTVTGQLLLGVV), 157-177 (LLSVIPWVSALVITAMLPLLF), 208-228 (GCIISGVLLGSLYGLLPLYLS), 235-255 (ASVGWWMALLVSSGIIGQWPI), 274-294 (VVILGSIAILGNYALAPALFI), 295-315 (LGCAGFTLYPVAMAWACEKVS), 325-345 (ALLMSYTIGSLTGPTMTSLLM), and 349-369 (SDNLLFIMIAGVALVYLMMLL).

The protein belongs to the major facilitator superfamily. YcaD (TC 2.A.1.26) family.

The protein localises to the cell inner membrane. This is an uncharacterized protein from Yersinia enterocolitica serotype O:8 / biotype 1B (strain NCTC 13174 / 8081).